The sequence spans 360 residues: Peptide chain release factor 1 (360 aa).

At Gln-235 the chain carries N5-methylglutamine.

This sequence belongs to the prokaryotic/mitochondrial release factor family. In terms of processing, methylated by PrmC. Methylation increases the termination efficiency of RF1.

It is found in the cytoplasm. Its function is as follows. Peptide chain release factor 1 directs the termination of translation in response to the peptide chain termination codons UAG and UAA. This chain is Peptide chain release factor 1, found in Cupriavidus taiwanensis (strain DSM 17343 / BCRC 17206 / CCUG 44338 / CIP 107171 / LMG 19424 / R1) (Ralstonia taiwanensis (strain LMG 19424)).